An 83-amino-acid chain; its full sequence is U3-theraphotoxin-Cg1a (83 aa).

The signal sequence occupies residues 1-23; it reads MRTFTLIAILTCAVLVIFHAAAA. The propeptide occupies 24–44; the sequence is EELEAQDVIETEALATLDEER. 3 cysteine pairs are disulfide-bonded: Cys48-Cys61, Cys52-Cys75, and Cys69-Cys80.

Belongs to the neurotoxin 12 (Hwtx-2) family. 03 (juruin) subfamily. Post-translationally, contains 3 disulfide bonds. Two different connectivities are observed in similar proteins (C1-C3, C2-C5, C4-C6 or C1-C4, C2-C5, C3-C6). As to expression, expressed by the venom gland.

It localises to the secreted. Functionally, probable ion channel inhibitor. The chain is U3-theraphotoxin-Cg1a from Chilobrachys guangxiensis (Chinese earth tiger tarantula).